The chain runs to 555 residues: Developmental and secondary metabolism regulator veA (555 aa).

3 disordered regions span residues M1–R23, E39–P60, and R234–S533. Over residues E13 to R23 the composition is skewed to basic and acidic residues. One can recognise a Velvet domain in the interval G25–R228. A Nuclear localization signal motif is present at residues E39 to C44. A compositionally biased stretch (basic and acidic residues) spans K239–D258. Residues A311–P331 are compositionally biased toward pro residues. 2 stretches are compositionally biased toward polar residues: residues R336–Y372 and H380–E389. Positions Q439–G479 are PEST. Composition is skewed to basic and acidic residues over residues R492 to R503 and A519 to S533.

This sequence belongs to the velvet family. VeA subfamily. As to quaternary structure, component of the heterotrimeric velvet complex composed of laeA, veA and velB; VeA acting as a bridging protein between laeA and velB.

It is found in the nucleus. It localises to the cytoplasm. Functionally, component of the velvet transcription factor complex that controls sexual/asexual developmental ratio in response to light, promoting sexual development in the darkness while stimulating asexual sporulation under illumination. The velvet complex hat acts as a global regulator for secondary metabolite gene expression. Increases spore dispersing capacity by impacting conidiophore architecture. The chain is Developmental and secondary metabolism regulator veA from Aspergillus niger (strain ATCC 1015 / CBS 113.46 / FGSC A1144 / LSHB Ac4 / NCTC 3858a / NRRL 328 / USDA 3528.7).